A 446-amino-acid polypeptide reads, in one-letter code: Exodeoxyribonuclease 7 large subunit (446 aa).

Belongs to the XseA family. In terms of assembly, heterooligomer composed of large and small subunits.

It is found in the cytoplasm. The catalysed reaction is Exonucleolytic cleavage in either 5'- to 3'- or 3'- to 5'-direction to yield nucleoside 5'-phosphates.. Its function is as follows. Bidirectionally degrades single-stranded DNA into large acid-insoluble oligonucleotides, which are then degraded further into small acid-soluble oligonucleotides. The sequence is that of Exodeoxyribonuclease 7 large subunit from Streptococcus pyogenes serotype M49 (strain NZ131).